A 328-amino-acid polypeptide reads, in one-letter code: NADH-quinone oxidoreductase subunit H (328 aa).

8 helical membrane-spanning segments follow: residues 10 to 30, 80 to 100, 118 to 138, 155 to 175, 191 to 211, 243 to 263, 272 to 292, and 306 to 326; these read IIKIVVIVLIFSALAGIGTYF, IAPVITAATAFMAAAAIPFLP, IGILYILGIMGVGLYGPLLGG, AVFISYEVVTGLSILAPIMMV, ITSWIVWTQPVAFILFWIAAF, LFFIGEYANMFFISFVISLLF, LLGALGLLAKVAFFFFFFLWT, and WLCWKVLMPIALINIVITAIV.

The protein belongs to the complex I subunit 1 family. In terms of assembly, NDH-1 is composed of 14 different subunits. Subunits NuoA, H, J, K, L, M, N constitute the membrane sector of the complex.

It is found in the cell inner membrane. It carries out the reaction a quinone + NADH + 5 H(+)(in) = a quinol + NAD(+) + 4 H(+)(out). NDH-1 shuttles electrons from NADH, via FMN and iron-sulfur (Fe-S) centers, to quinones in the respiratory chain. The immediate electron acceptor for the enzyme in this species is believed to be ubiquinone. Couples the redox reaction to proton translocation (for every two electrons transferred, four hydrogen ions are translocated across the cytoplasmic membrane), and thus conserves the redox energy in a proton gradient. This subunit may bind ubiquinone. The chain is NADH-quinone oxidoreductase subunit H from Sulfurimonas denitrificans (strain ATCC 33889 / DSM 1251) (Thiomicrospira denitrificans (strain ATCC 33889 / DSM 1251)).